The following is a 372-amino-acid chain: Glutamate 5-kinase (372 aa).

K14 contacts ATP. Residues S54, D141, and N153 each coordinate substrate. 173–174 (TD) is a binding site for ATP. Residues 280–358 (RGHVVIDAGA…GEIEAVLGYM (79 aa)) form the PUA domain.

It belongs to the glutamate 5-kinase family.

It is found in the cytoplasm. It catalyses the reaction L-glutamate + ATP = L-glutamyl 5-phosphate + ADP. The protein operates within amino-acid biosynthesis; L-proline biosynthesis; L-glutamate 5-semialdehyde from L-glutamate: step 1/2. In terms of biological role, catalyzes the transfer of a phosphate group to glutamate to form L-glutamate 5-phosphate. The sequence is that of Glutamate 5-kinase from Burkholderia thailandensis (strain ATCC 700388 / DSM 13276 / CCUG 48851 / CIP 106301 / E264).